Here is a 497-residue protein sequence, read N- to C-terminus: Putative aldehyde dehydrogenase AldA (497 aa).

Residue 213 to 219 (GKGSESG) participates in NAD(+) binding. Active-site residues include glutamate 257 and cysteine 291.

Belongs to the aldehyde dehydrogenase family.

The enzyme catalyses an aldehyde + NAD(+) + H2O = a carboxylate + NADH + 2 H(+). The chain is Putative aldehyde dehydrogenase AldA (aldA) from Staphylococcus haemolyticus (strain JCSC1435).